The primary structure comprises 356 residues: tRNA-specific 2-thiouridylase MnmA 1 (356 aa).

ATP is bound by residues 8–15 (GMSGGVDS) and methionine 34. The active-site Nucleophile is the cysteine 103. Cysteine 103 and cysteine 199 are oxidised to a cystine. Glycine 127 serves as a coordination point for ATP. Residues 149 to 151 (KDQ) are interaction with tRNA. Cysteine 199 functions as the Cysteine persulfide intermediate in the catalytic mechanism. The segment at 305–306 (RY) is interaction with tRNA.

The protein belongs to the MnmA/TRMU family.

The protein resides in the cytoplasm. It carries out the reaction S-sulfanyl-L-cysteinyl-[protein] + uridine(34) in tRNA + AH2 + ATP = 2-thiouridine(34) in tRNA + L-cysteinyl-[protein] + A + AMP + diphosphate + H(+). Its function is as follows. Catalyzes the 2-thiolation of uridine at the wobble position (U34) of tRNA, leading to the formation of s(2)U34. The sequence is that of tRNA-specific 2-thiouridylase MnmA 1 from Clostridium botulinum (strain Loch Maree / Type A3).